The primary structure comprises 234 residues: ATP-dependent dethiobiotin synthetase BioD (234 aa).

ATP is bound at residue 12–17 (DVGKTI). Thr-16 provides a ligand contact to Mg(2+). Lys-37 is a catalytic residue. Position 41 (Thr-41) interacts with substrate. ATP is bound by residues Asp-54 and 115–118 (EGAG). Residues Asp-54 and Glu-115 each coordinate Mg(2+).

Belongs to the dethiobiotin synthetase family. Homodimer. Mg(2+) is required as a cofactor.

It is found in the cytoplasm. It carries out the reaction (7R,8S)-7,8-diammoniononanoate + CO2 + ATP = (4R,5S)-dethiobiotin + ADP + phosphate + 3 H(+). Its pathway is cofactor biosynthesis; biotin biosynthesis; biotin from 7,8-diaminononanoate: step 1/2. In terms of biological role, catalyzes a mechanistically unusual reaction, the ATP-dependent insertion of CO2 between the N7 and N8 nitrogen atoms of 7,8-diaminopelargonic acid (DAPA, also called 7,8-diammoniononanoate) to form a ureido ring. The polypeptide is ATP-dependent dethiobiotin synthetase BioD (Lysinibacillus sphaericus (strain C3-41)).